Reading from the N-terminus, the 168-residue chain is Large ribosomal subunit protein uL29c (168 aa).

Positions 1-20 are disordered; the sequence is MLAIHSLSSTPCSSGLTSPP. The transit peptide at 1-58 directs the protein to the chloroplast; that stretch reads MLAIHSLSSTPCSSGLTSPPKSTLLTKSSFHGLRLPSVNLSSSLRLRVQTPPSSVVVM.

Component of the chloroplast large ribosomal subunit (LSU). Mature 70S chloroplast ribosomes of higher plants consist of a small (30S) and a large (50S) subunit. The 30S small subunit contains 1 molecule of ribosomal RNA (16S rRNA) and 24 different proteins. The 50S large subunit contains 3 rRNA molecules (23S, 5S and 4.5S rRNA) and 33 different proteins.

Its subcellular location is the plastid. The protein resides in the chloroplast. In terms of biological role, component of the chloroplast ribosome (chloro-ribosome), a dedicated translation machinery responsible for the synthesis of chloroplast genome-encoded proteins, including proteins of the transcription and translation machinery and components of the photosynthetic apparatus. The sequence is that of Large ribosomal subunit protein uL29c (RPL29) from Spinacia oleracea (Spinach).